A 166-amino-acid polypeptide reads, in one-letter code: Phospholipase A2 inhibitor A1 (166 aa).

A signal peptide spans 1–19 (MRLILLSGLLLLGIFLANG). In terms of domain architecture, C-type lectin spans 46 to 161 (LKGSFLIVHK…CDDNLLVVCE (116 aa)). Cystine bridges form between Cys-83–Cys-160 and Cys-138–Cys-152. Asn-122 carries N-linked (GlcNAc...) asparagine glycosylation.

It belongs to the alpha-type phospholipase A2 inhibitor family. In terms of assembly, homotrimer; non-covalently linked. Expressed by the liver.

The protein resides in the secreted. This phospholipase A2 inhibitor binds directly phospholipase A2 in the presence or absence of calcium. In Bothrops neuwiedi (Neuwied's lancehead), this protein is Phospholipase A2 inhibitor A1.